Reading from the N-terminus, the 447-residue chain is Cobyrinate a,c-diamide synthase (447 aa).

Residues 252 to 439 (KIAIAFDESF…AHQHAVGNPY (188 aa)) enclose the GATase cobBQ-type domain. Cys331 serves as the catalytic Nucleophile.

It belongs to the CobB/CbiA family. Mg(2+) serves as cofactor.

It catalyses the reaction cob(II)yrinate + 2 L-glutamine + 2 ATP + 2 H2O = cob(II)yrinate a,c diamide + 2 L-glutamate + 2 ADP + 2 phosphate + 2 H(+). The enzyme catalyses Ni-sirohydrochlorin + 2 L-glutamine + 2 ATP + 2 H2O = Ni-sirohydrochlorin a,c-diamide + 2 L-glutamate + 2 ADP + 2 phosphate + 2 H(+). The protein operates within cofactor biosynthesis; adenosylcobalamin biosynthesis; cob(II)yrinate a,c-diamide from sirohydrochlorin (anaerobic route): step 10/10. Its function is as follows. Catalyzes the ATP-dependent amidation of the two carboxylate groups at positions a and c of cobyrinate, using either L-glutamine or ammonia as the nitrogen source. Involved in the biosynthesis of the unique nickel-containing tetrapyrrole coenzyme F430, the prosthetic group of methyl-coenzyme M reductase (MCR), which plays a key role in methanogenesis and anaerobic methane oxidation. Catalyzes the ATP-dependent amidation of the two carboxylate groups at positions a and c of Ni-sirohydrochlorin, using L-glutamine or ammonia as the nitrogen source. This chain is Cobyrinate a,c-diamide synthase, found in Methanococcus vannielii (strain ATCC 35089 / DSM 1224 / JCM 13029 / OCM 148 / SB).